Here is a 548-residue protein sequence, read N- to C-terminus: Thermolysin (548 aa).

Positions 1–28 (MKMKMKLASFGLAAGLAAQVFLPYNALA) are cleaved as a signal peptide. Positions 29–232 (STEHVTWNQQ…DAAKPGDVKS (204 aa)) are cleaved as a propeptide — activation peptide. Positions 289, 291, 293, and 370 each coordinate Ca(2+). His374 provides a ligand contact to Zn(2+). Residue Glu375 is part of the active site. Zn(2+)-binding residues include His378 and Glu398. Ca(2+) is bound by residues Glu409, Asn415, Asp417, Glu419, Glu422, Tyr425, Thr426, Ile429, and Asp432. The Proton donor role is filled by His463.

This sequence belongs to the peptidase M4 family. The cofactor is Ca(2+). It depends on Zn(2+) as a cofactor.

It is found in the secreted. It catalyses the reaction Preferential cleavage: Xaa-|-Leu &gt; Xaa-|-Phe.. Its function is as follows. Extracellular zinc metalloprotease. The sequence is that of Thermolysin (npr) from Bacillus thermoproteolyticus.